A 45-amino-acid chain; its full sequence is Photosystem II reaction center protein K (45 aa).

The propeptide occupies 1–8 (MITAIIIA). Residues 23–43 (ILPVIPIFFLLLAFVWQAAIG) form a helical membrane-spanning segment.

Belongs to the PsbK family. As to quaternary structure, PSII is composed of 1 copy each of membrane proteins PsbA, PsbB, PsbC, PsbD, PsbE, PsbF, PsbH, PsbI, PsbJ, PsbK, PsbL, PsbM, PsbT, PsbX, PsbY, PsbZ, Psb30/Ycf12, at least 3 peripheral proteins of the oxygen-evolving complex and a large number of cofactors. It forms dimeric complexes.

The protein localises to the plastid. It is found in the chloroplast thylakoid membrane. In terms of biological role, one of the components of the core complex of photosystem II (PSII). PSII is a light-driven water:plastoquinone oxidoreductase that uses light energy to abstract electrons from H(2)O, generating O(2) and a proton gradient subsequently used for ATP formation. It consists of a core antenna complex that captures photons, and an electron transfer chain that converts photonic excitation into a charge separation. This is Photosystem II reaction center protein K from Gracilaria tenuistipitata var. liui (Red alga).